A 520-amino-acid polypeptide reads, in one-letter code: Cobyric acid synthase (520 aa).

The GATase cobBQ-type domain maps to 257 to 451; sequence WLTVAAVRLP…VHGLLESDGF (195 aa). Cysteine 338 acts as the Nucleophile in catalysis. Histidine 443 is an active-site residue.

It belongs to the CobB/CobQ family. CobQ subfamily.

It participates in cofactor biosynthesis; adenosylcobalamin biosynthesis. Catalyzes amidations at positions B, D, E, and G on adenosylcobyrinic A,C-diamide. NH(2) groups are provided by glutamine, and one molecule of ATP is hydrogenolyzed for each amidation. The polypeptide is Cobyric acid synthase (Nocardia farcinica (strain IFM 10152)).